Reading from the N-terminus, the 363-residue chain is Holliday junction branch migration complex subunit RuvB (363 aa).

The disordered stretch occupies residues 1 to 23; that stretch reads MHKDEDQRLLGPAPLPNDPDRSL. The large ATPase domain (RuvB-L) stretch occupies residues 1 to 184; the sequence is MHKDEDQRLL…FGIPIRLNFY (184 aa). ATP is bound by residues L23, R24, G65, K68, T69, T70, 131–133, R174, Y184, and R221; that span reads EDY. T69 is a binding site for Mg(2+). Positions 185–255 are small ATPAse domain (RuvB-S); that stretch reads TIEELEYIVQ…IADEALSRLE (71 aa). Residues 258 to 363 form a head domain (RuvB-H) region; the sequence is HLGLDPLDRR…QTTLWDGEDD (106 aa). Residues R294, R313, and R318 each coordinate DNA.

This sequence belongs to the RuvB family. Homohexamer. Forms an RuvA(8)-RuvB(12)-Holliday junction (HJ) complex. HJ DNA is sandwiched between 2 RuvA tetramers; dsDNA enters through RuvA and exits via RuvB. An RuvB hexamer assembles on each DNA strand where it exits the tetramer. Each RuvB hexamer is contacted by two RuvA subunits (via domain III) on 2 adjacent RuvB subunits; this complex drives branch migration. In the full resolvosome a probable DNA-RuvA(4)-RuvB(12)-RuvC(2) complex forms which resolves the HJ.

The protein resides in the cytoplasm. It catalyses the reaction ATP + H2O = ADP + phosphate + H(+). The RuvA-RuvB-RuvC complex processes Holliday junction (HJ) DNA during genetic recombination and DNA repair, while the RuvA-RuvB complex plays an important role in the rescue of blocked DNA replication forks via replication fork reversal (RFR). RuvA specifically binds to HJ cruciform DNA, conferring on it an open structure. The RuvB hexamer acts as an ATP-dependent pump, pulling dsDNA into and through the RuvAB complex. RuvB forms 2 homohexamers on either side of HJ DNA bound by 1 or 2 RuvA tetramers; 4 subunits per hexamer contact DNA at a time. Coordinated motions by a converter formed by DNA-disengaged RuvB subunits stimulates ATP hydrolysis and nucleotide exchange. Immobilization of the converter enables RuvB to convert the ATP-contained energy into a lever motion, pulling 2 nucleotides of DNA out of the RuvA tetramer per ATP hydrolyzed, thus driving DNA branch migration. The RuvB motors rotate together with the DNA substrate, which together with the progressing nucleotide cycle form the mechanistic basis for DNA recombination by continuous HJ branch migration. Branch migration allows RuvC to scan DNA until it finds its consensus sequence, where it cleaves and resolves cruciform DNA. In Bartonella tribocorum (strain CIP 105476 / IBS 506), this protein is Holliday junction branch migration complex subunit RuvB.